The primary structure comprises 298 residues: Inosose dehydratase (298 aa).

The protein belongs to the IolE/MocC family. It depends on glutathione as a cofactor. The cofactor is Co(2+). Mn(2+) serves as cofactor.

The catalysed reaction is scyllo-inosose = 3D-3,5/4-trihydroxycyclohexane-1,2-dione + H2O. Its function is as follows. Catalyzes the dehydration of inosose (2-keto-myo-inositol, 2KMI or 2,4,6/3,5-pentahydroxycyclohexanone) to 3D-(3,5/4)-trihydroxycyclohexane-1,2-dione (D-2,3-diketo-4-deoxy-epi-inositol). The sequence is that of Inosose dehydratase from Glaesserella parasuis serovar 5 (strain SH0165) (Haemophilus parasuis).